Reading from the N-terminus, the 740-residue chain is Ethylene receptor 1 (740 aa).

3 helical membrane-spanning segments follow: residues 23 to 43 (ISDF…IYFV), 54 to 74 (VLVQ…INLW), and 92 to 112 (VLTA…IPDL). Residues cysteine 65 and histidine 69 each coordinate Cu cation. The 150-residue stretch at 158-307 (DRHTILKTTL…VVADQVAVAL (150 aa)) folds into the GAF domain. The region spanning 350-588 (VMNHEMRTPM…TFIVKLGIAD (239 aa)) is the Histidine kinase domain. At histidine 353 the chain carries Phosphohistidine; by autocatalysis. The Response regulatory domain occupies 614 to 731 (KVLVMDDNGV…KMRSVLSELI (118 aa)). Aspartate 662 bears the 4-aspartylphosphate mark.

Belongs to the ethylene receptor family. As to quaternary structure, homodimer; disulfide-linked. Cu cation serves as cofactor. In terms of processing, activation probably requires a transfer of a phosphate group between a His in the transmitter domain and an Asp of the receiver domain. As to expression, in seeds and placenta.

The protein localises to the endoplasmic reticulum membrane. The catalysed reaction is ATP + protein L-histidine = ADP + protein N-phospho-L-histidine.. In terms of biological role, may act early in the ethylene signal transduction pathway, possibly as an ethylene receptor, or as a regulator of the pathway. The protein is Ethylene receptor 1 (ETR1) of Cucumis melo var. cantalupensis (Netted muskmelon).